Reading from the N-terminus, the 144-residue chain is Noggin (144 aa).

An N-terminal signal peptide occupies residues 1–4 (GGGG). Intrachain disulfides connect Cys67/Cys104, Cys90/Cys140, Cys96/Cys142, and Cys119/Cys127.

The protein belongs to the noggin family. In terms of assembly, homodimer. Interacts with GDF5; inhibits chondrocyte differentiation. Prominently expressed in the CNS. High levels found in mitral and tufted cells in the olfactory bulb, piriform cortex of the brain and Purkinje cells in the cerebellum. Low level expression seen in the lung, skeletal muscle and skin.

The protein localises to the secreted. Functionally, essential for cartilage morphogenesis and joint formation. Inhibitor of bone morphogenetic proteins (BMP) signaling which is required for growth and patterning of the neural tube and somite. Inhibits chondrocyte differentiation through its interaction with GDF5 and, probably, GDF6. This is Noggin (Nog) from Rattus norvegicus (Rat).